A 417-amino-acid polypeptide reads, in one-letter code: MSLAPKKTIDDAVVKGKKVLIRVDFNVPVKNGEITNDFRIRSALPTIQKVLKEGGSCILMSHLGRPKGAKMSDPKPAKSVRGYEEAATLRPVAARLSELLGQKVEFAPDCLDAASYAAKLKGGDVLLLENVRFYAEEGSKKEEERDAMAKVLAAYGDVYVSDAFGTAHRDSADMTGIPKVLGAGYAGYLMEKEINYFAQVLNNPPRPLVAIVGGAKVSDKIQLLDNMLGRINYLVIGGAMAYTFQKAQGHAIGISMCEEDKLDLAKSLLKKAQERNVEVLLPVDHVCNKEFQGVDAPLVTKDVEIPEGYMALDIGPKTIKIYEDVIAKCKSTIWNGPMGVFEMPCYSKGTFAVAKAMGNGTQKNGLMSIIGGGDTASAAELSGEAKNMSHVSTGGGASLELLEGKSLPGVTVLTNKE.

Residues Val23, Asp24, Phe25, Asn26, Arg39, Ser61, His62, Gly64, Arg65, Arg132, His168, and Arg169 each contribute to the (2R)-3-phosphoglycerate site. Residues Gly214 and Ala215 each coordinate ADP. Gly214 is a CDP binding site. Residues Ala215 and Lys216 each contribute to the AMP site. Position 215 (Ala215) interacts with ATP. Ala215 provides a ligand contact to Mg(2+). Position 216 (Lys216) interacts with (2R)-3-phosphoglycerate. Asp219 contributes to the CDP binding site. Asp219 is a binding site for Mg(2+). Residues Lys220 and Gly238 each coordinate ADP. Lys220 lines the AMP pocket. Position 220 (Lys220) interacts with ATP. CDP is bound at residue Gly238. Residues Ala239 and Ala311 each contribute to the AMP site. ATP is bound by residues Ala239 and Ala311. ADP is bound by residues Ala311 and Asn335. CDP-binding residues include Gly336 and Phe341. Residues Phe341, Glu342, Asp374, and Thr375 each contribute to the ADP site. AMP is bound at residue Glu342. The ATP site is built by Glu342, Asp374, and Thr375. Asp374 contributes to the Mg(2+) binding site.

The protein belongs to the phosphoglycerate kinase family. In terms of assembly, monomer. The cofactor is Mg(2+).

The protein localises to the cytoplasm. The enzyme catalyses (2R)-3-phosphoglycerate + ATP = (2R)-3-phospho-glyceroyl phosphate + ADP. Its pathway is carbohydrate degradation; glycolysis; pyruvate from D-glyceraldehyde 3-phosphate: step 2/5. In Crithidia fasciculata, this protein is Phosphoglycerate kinase, cytosolic (PGKB).